The chain runs to 118 residues: Holo-[acyl-carrier-protein] synthase (118 aa).

Residues aspartate 8 and glutamate 58 each contribute to the Mg(2+) site.

Belongs to the P-Pant transferase superfamily. AcpS family. Requires Mg(2+) as cofactor.

Its subcellular location is the cytoplasm. The catalysed reaction is apo-[ACP] + CoA = holo-[ACP] + adenosine 3',5'-bisphosphate + H(+). Transfers the 4'-phosphopantetheine moiety from coenzyme A to a Ser of acyl-carrier-protein. The protein is Holo-[acyl-carrier-protein] synthase of Streptococcus pyogenes serotype M5 (strain Manfredo).